The following is a 518-amino-acid chain: MTQLPTAGPVIRRFDMSAQFTALYRISVALSQESNTARALAAILEVLHDHAFMQYGMVCLFDKERNALFVESLHGIDGERKKETRHVRYRMGEGVIGAVMSQRQALVLPRISDDQRFLDRLNIYDYSLPLIGVPIPGADNQPAGVLVAQPMALHEDRLAASTRFLEMVANLISQPLRSATPPESLPAQTPVRCSVPRQFGFEQMVGKSQAMRQTMDILRQVSKWDTTVLVRGESGTGKELIANAIHYNSPRAAAPFVKFNCAALPDNLLESELFGHEKGAFTGAIRTRKGRFELADGGTLFLDEIGESSASFQAKLLRILQEGEMERVGGDTTLKVDVRIIAATNRNLEEEVRAGNFREDLYYRLNVMPVSLPALRERLDDIADLAPFLVKKIALRQGRELRISDGAVRLLMTYSWPGNVRELENCLERASVMTDEGLIDRDVILFNHHESPALSVKPGLPLATDESWLDQELDERQRVIAALEKTGWVQAKAARLLGMTPRQIAYRIQIMDINMHRI.

Residues 35 to 176 (NTARALAAIL…MVANLISQPL (142 aa)) form the GAF domain. Residues 205 to 432 (VGKSQAMRQT…LENCLERASV (228 aa)) enclose the Sigma-54 factor interaction domain. ATP is bound by residues 232–239 (GESGTGKE) and 295–304 (ADGGTLFLDE). The interval 433-475 (MTDEGLIDRDVILFNHHESPALSVKPGLPLATDESWLDQELDE) is inter-domain linker. The tract at residues 476–518 (RQRVIAALEKTGWVQAKAARLLGMTPRQIAYRIQIMDINMHRI) is C-terminal DNA-binding domain. The segment at residues 490 to 509 (QAKAARLLGMTPRQIAYRIQ) is a DNA-binding region (H-T-H motif).

Interacts with sigma-54.

Required for activation of most nif operons, which are directly involved in nitrogen fixation. The chain is Nif-specific regulatory protein (nifA) from Enterobacter agglomerans (Erwinia herbicola).